Reading from the N-terminus, the 172-residue chain is Small ribosomal subunit protein bS16 (172 aa).

The segment at 125-172 (KKRKAKEEAEAKAAAEKAAEEAAAAEAAKAEEEAAKAEEADSAEESAE) is disordered. Basic and acidic residues-rich tracts occupy residues 129–144 (AKEE…KAAE) and 152–163 (AKAEEEAAKAEE).

Belongs to the bacterial ribosomal protein bS16 family.

The protein is Small ribosomal subunit protein bS16 of Corynebacterium aurimucosum (strain ATCC 700975 / DSM 44827 / CIP 107346 / CN-1) (Corynebacterium nigricans).